We begin with the raw amino-acid sequence, 858 residues long: Protein translocase subunit SecA (858 aa).

Residues Gln88, 106–110, and Asp494 contribute to the ATP site; that span reads GEGKT. Residues 808 to 848 form a disordered region; it reads KEDRGQLSYSGGGNAEDARNTPAKAAPRIGRNDPCPCGSGR. The Zn(2+) site is built by Cys842, Cys844, Cys853, and Cys854.

It belongs to the SecA family. Monomer and homodimer. Part of the essential Sec protein translocation apparatus which comprises SecA, SecYEG and auxiliary proteins SecDF-YajC and YidC. It depends on Zn(2+) as a cofactor.

It is found in the cell inner membrane. It localises to the cytoplasm. It catalyses the reaction ATP + H2O + cellular proteinSide 1 = ADP + phosphate + cellular proteinSide 2.. Its function is as follows. Part of the Sec protein translocase complex. Interacts with the SecYEG preprotein conducting channel. Has a central role in coupling the hydrolysis of ATP to the transfer of proteins into and across the cell membrane, serving as an ATP-driven molecular motor driving the stepwise translocation of polypeptide chains across the membrane. The chain is Protein translocase subunit SecA from Desulfovibrio desulfuricans (strain ATCC 27774 / DSM 6949 / MB).